A 294-amino-acid chain; its full sequence is Probable 2-(5''-triphosphoribosyl)-3'-dephosphocoenzyme-A synthase (294 aa).

Belongs to the CitG/MdcB family.

The enzyme catalyses 3'-dephospho-CoA + ATP = 2'-(5''-triphospho-alpha-D-ribosyl)-3'-dephospho-CoA + adenine. This is Probable 2-(5''-triphosphoribosyl)-3'-dephosphocoenzyme-A synthase from Streptococcus equi subsp. zooepidemicus (strain H70).